The chain runs to 578 residues: MRLSKLFMPTLKEAPSDAIIASNKLMLRAALARKISNGLYSYLPLGVRVLNKISNIIREEMDAIGSNECIMPILVSKELLTPSGRWERFKKELFRLKDRNDVDMAMGPTHEEAFTITAQNEIQSYKDFPLTLYQIHTKFRDEIRPRFGVIRSKEFTMKDAYSFHITKECLDKTYNDMSGAYTKIFKRMGLDTVSVKADSGAMGGEGSEEFMVLSEVGEETIIFCSKCDYRANVEKANVKEEEAAKSYTDKALEEVHTPDIKTINDLEKFFNTSSKNFIKSIIYKTEEDEIILVAIRGDLEINETKLSNALGGLDIELADEETVKEVTGARVGFASPIGLKKKIRIFADNSIKSVADAIVGGNKDDTHIKNVNIERDFNIDVWGDFRTAKEGDRCPQCGETLYQKKGLELGHIFKLGDKYTEAFNFKVLDENNKEITPIMGCYGIGVNRALASVIEQNYDDKGIIFPISVAPYEAIVVAIDKETEDSFKKAEEIYNTLNSIGVETMFDDRKERLGVKLNDCDLIGIPIRIIVGKKSLQKGVVEFKLRKSQESVEVKVEDIIEYVKTKKQELFNEINSRL.

This sequence belongs to the class-II aminoacyl-tRNA synthetase family. ProS type 1 subfamily. Homodimer.

Its subcellular location is the cytoplasm. It catalyses the reaction tRNA(Pro) + L-proline + ATP = L-prolyl-tRNA(Pro) + AMP + diphosphate. Functionally, catalyzes the attachment of proline to tRNA(Pro) in a two-step reaction: proline is first activated by ATP to form Pro-AMP and then transferred to the acceptor end of tRNA(Pro). As ProRS can inadvertently accommodate and process non-cognate amino acids such as alanine and cysteine, to avoid such errors it has two additional distinct editing activities against alanine. One activity is designated as 'pretransfer' editing and involves the tRNA(Pro)-independent hydrolysis of activated Ala-AMP. The other activity is designated 'posttransfer' editing and involves deacylation of mischarged Ala-tRNA(Pro). The misacylated Cys-tRNA(Pro) is not edited by ProRS. The chain is Proline--tRNA ligase from Brachyspira hyodysenteriae (strain ATCC 49526 / WA1).